Reading from the N-terminus, the 804-residue chain is Cell surface sensor MSB2 (804 aa).

The first 20 residues, 1-20 (MHNFSKLAVAFVAAASFASA), serve as a signal peptide directing secretion. At 21–694 (EPETKAKVER…TNQSATQRGT (674 aa)) the chain is on the extracellular side. An N-linked (GlcNAc...) asparagine glycan is attached at Asn45. 2 stretches are compositionally biased toward low complexity: residues 46–58 (TTTP…SSTS) and 69–80 (SSFSSSASSSSA). Disordered regions lie at residues 46–90 (TTTP…RQPT) and 105–220 (TDST…ATSN). Positions 46-475 (TTTPASEASS…SVAPTSATSS (430 aa)) are serine/threonine rich region (STR). Composition is skewed to polar residues over residues 81–90 (QELTASRQPT) and 109–126 (PFSQ…SATG). Composition is skewed to low complexity over residues 128–143 (VTPI…PSTA) and 150–169 (SALT…SVTS). Asn157 carries an N-linked (GlcNAc...) asparagine glycan. The segment covering 170–188 (PGSTSGPAGTPESSSASDF) has biased composition (polar residues). The segment covering 189–202 (TSAVATSRASTATS) has biased composition (low complexity). N-linked (GlcNAc...) asparagine glycans are attached at residues Asn298, Asn308, Asn357, and Asn393. Polar residues predominate over residues 345–394 (VQTLPPVSTPTANGTVTSPPVDSQTTVLPTTTPGLSSDTIVTSPGVTANS). The disordered stretch occupies residues 345-516 (VQTLPPVSTP…APTVLPSDLP (172 aa)). 2 stretches are compositionally biased toward low complexity: residues 395–407 (TQVP…TIPT) and 427–476 (NNTV…TSSA). 2 N-linked (GlcNAc...) asparagine glycosylation sites follow: Asn427 and Asn433. The tract at residues 482–641 (WLPTTIIVQA…NGMLAHNLTM (160 aa)) is HKR11-MSB2 homology domain (HMH). Over residues 493–508 (LPSTTGSSTNAPSSAP) the composition is skewed to polar residues. Residues Asn629, Asn638, Asn669, Asn683, and Asn686 are each glycosylated (N-linked (GlcNAc...) asparagine). The segment at 658-689 (KPAGAGSGTGGNGSNGPNDVFNNDNNSTNQSA) is disordered. The segment covering 660–671 (AGAGSGTGGNGS) has biased composition (gly residues). Residues 672-686 (NGPNDVFNNDNNSTN) are compositionally biased toward low complexity. The helical transmembrane segment at 695 to 715 (VAGIAFGAVSLAAAYGAAMFI) threads the bilayer. Over 716-804 (VARRYKKKRQ…VAQENSLGWN (89 aa)) the chain is Cytoplasmic. Disordered stretches follow at residues 724–748 (RQAH…PALM) and 762–804 (GVMG…LGWN). Residues 731–744 (SSVATPSEMRQSGS) are compositionally biased toward polar residues. A compositionally biased stretch (low complexity) spans 774-787 (GSNGSGRSAGNSAR).

This sequence belongs to the HKR1/MSB2 family.

Its subcellular location is the cell membrane. It localises to the vacuole membrane. In terms of biological role, MSB2 and SHO1 have overlapping functions in recognizing various surface signals for MAPK PMK1 activation and appressorium formation. While MSB2 is critical for sensing surface hydrophobicity and cutin monomers, SHO1 may play a more important role in recognizing rice leaf waxes. The polypeptide is Cell surface sensor MSB2 (Pyricularia oryzae (strain 70-15 / ATCC MYA-4617 / FGSC 8958) (Rice blast fungus)).